A 259-amino-acid chain; its full sequence is MVIVGFPGDPVDTVILPGGAGVDAARSEPALIDWVKAVSGTARRVVTVCTGAFLAAEAGLLGRTPSDDALGLCRTFRPRISGRSGRCRPDLHAQFAEGVDRGWSHRRHRPRAGTGRRRPRHRDCPDGCPLARPVSAPTRWADPVRGSGVDATRQTDLDPPGAGGHRGRAGGAHRIGELAQRAAMSPRHFTRVFSDEVGEAPGRYVERIRTEAARRQLEETHDTVVAIAARCGFGTAETMRRSFIRRVGISPDQYRKAFA.

A compositionally biased stretch (basic residues) spans 104–121 (SHRRHRPRAGTGRRRPRH). Positions 104–170 (SHRRHRPRAG…GAGGHRGRAG (67 aa)) are disordered. The 84-residue stretch at 174 to 257 (RIGELAQRAA…GISPDQYRKA (84 aa)) folds into the HTH araC/xylS-type domain. 2 consecutive DNA-binding regions (H-T-H motif) follow at residues 176–197 (GELA…SDEV) and 224–247 (VVAI…IRRV).

In terms of biological role, controls the expression of genes important for virulence. This Mycobacterium tuberculosis (strain ATCC 25618 / H37Rv) protein is HTH-type transcriptional regulator Rv1931c.